The primary structure comprises 197 residues: FMN-dependent NADH:quinone oxidoreductase (197 aa).

FMN is bound by residues S10 and 17–19 (SFS).

This sequence belongs to the azoreductase type 1 family. As to quaternary structure, homodimer. The cofactor is FMN.

The catalysed reaction is 2 a quinone + NADH + H(+) = 2 a 1,4-benzosemiquinone + NAD(+). It catalyses the reaction N,N-dimethyl-1,4-phenylenediamine + anthranilate + 2 NAD(+) = 2-(4-dimethylaminophenyl)diazenylbenzoate + 2 NADH + 2 H(+). Its function is as follows. Quinone reductase that provides resistance to thiol-specific stress caused by electrophilic quinones. In terms of biological role, also exhibits azoreductase activity. Catalyzes the reductive cleavage of the azo bond in aromatic azo compounds to the corresponding amines. This chain is FMN-dependent NADH:quinone oxidoreductase, found in Mycoplasmoides gallisepticum (strain R(low / passage 15 / clone 2)) (Mycoplasma gallisepticum).